Reading from the N-terminus, the 346-residue chain is MDSNSNNTKSIKRKVVDQLVEGYEFATQLQLLLSHQHSNQYHIDETRLVSGSGSVSGGPDPVDELMSKILGSFHKTISVLDSFDPVAVSVPIAVEGSWNASCGDDSATPVSCNGGDSGESKKKRLGVGKGKRGCYTRKTRSHTRIVEAKSSEDRYAWRKYGQKEILNTTFPRSYFRCTHKPTQGCKATKQVQKQDQDSEMFQITYIGYHTCTANDQTHAKTEPFDQEIIMDSEKTLAASTAQNHVNAMVQEQENNTSSVTAIDAGMVKEEQNNNGDQSKDYYEGSSTGEDLSLVWQETMMFDDHQNHYYCGETSTTSHQFGFIDNDDQFSSFFDSYCADYERTSAM.

A disordered region spans residues 109–130 (PVSCNGGDSGESKKKRLGVGKG). A compositionally biased stretch (basic residues) spans 121–130 (KKKRLGVGKG). The WRKY DNA-binding region spans 146 to 214 (VEAKSSEDRY…YIGYHTCTAN (69 aa)). Positions 267-282 (VKEEQNNNGDQSKDYY) are enriched in basic and acidic residues. The tract at residues 267–286 (VKEEQNNNGDQSKDYYEGSS) is disordered.

It belongs to the WRKY group III family. In terms of assembly, interacts with WRKY30. Binds to BZR2/BES1 to cooperatively regulate the expression of target genes. Interacts with ASK7/BIN2. Phosphorylated and destabilized by ASK7/BIN2. As to expression, expressed in leaves.

The protein localises to the nucleus. Functionally, transcription factor. Interacts specifically with the W box (5'-(T)TGAC[CT]-3'), a frequently occurring elicitor-responsive cis-acting element. Together with WRKY70, negative regulator of developmental senescence, probably via the regulation of several senescence-associated markers genes. Positive regulator of EDS1-dependent defense against E.amylovora. In collaboration with WRKY70, prevents stomatal closure and, consequently, osmotic stress tolerance. Together with WRKY46 and WRKY70, promotes brassinosteroid (BR)-regulated plant growth but prevent drought response by modulating gene expression. Negative regulator of SA biosynthesis. Prevents defense response to the necrotrophic pathogens P.carotovorum and B.cinerea, but promotes defense against biotrophic/hemibiotrophic pathogens P.syringae pv. tomato (Pst) DC3000, probably by regulating negatively the jasmonic acid (JA)/ethylene (ET) and positively the salicylic acid (SA) signaling pathways. In Arabidopsis thaliana (Mouse-ear cress), this protein is Probable WRKY transcription factor 54.